Consider the following 176-residue polypeptide: dCTP deaminase (176 aa).

DCTP contacts are provided by residues 99–104 (RSTLAR) and D115. E125 acts as the Proton donor/acceptor in catalysis. Q163 provides a ligand contact to dCTP.

This sequence belongs to the dCTP deaminase family. Homotrimer.

It carries out the reaction dCTP + H2O + H(+) = dUTP + NH4(+). The protein operates within pyrimidine metabolism; dUMP biosynthesis; dUMP from dCTP (dUTP route): step 1/2. Catalyzes the deamination of dCTP to dUTP. This Pyrobaculum arsenaticum (strain DSM 13514 / JCM 11321 / PZ6) protein is dCTP deaminase.